Consider the following 1174-residue polypeptide: MNATDAESRKPENKPSSESSSSGSTSGSSDGEVSSKTYFKNNKSKVLSGQREVVLEVVRDLSYTICKEAEEKLVERFPRKDGSNEMLPKEDSINTNHNYTTDSDEHPVELTTKTEECKNTEKTKKKSFVRALSKDKQLSAYRSRSRSTRLSYSGHISRTHSVEKSLSRYKKSVLRNRRTSFGHGRDSSTTKRSVSRDKDNRLRRRIGSSRSHTRSHSRFRRSEKKLPSRSPRRIRSQERRHERRRSMSSDYERIALRRSEPIKRRDKDEFFKNNKKVSGDIKKGKGNDNGTVAELEAKITERQRKSLDILTSRTGGACLTPDKLRMIQAEITDKSSAAYQSIAREALKKYIHGYINKVNVDSVAVITRKLLKDNIVRGRGVLCHSIIQAQATSPKFTHVYAAMVAIINSKFPNIGELLLKRLVIQFKRAFGCNDKTVCLTSSHFIAHLVNQRVAHEILALEILTLLIESPTDDNVEVAITFLKECGMKLTEVSSDRVGGIFELLKNILHQGKLDKRVQYMIKVLFQVRRDGFKDHQSIIESLELVEEYAQFTHLLLLEDVTYPKDILNEFKFDDQYETNEEKYKALSKNILGSHASDSDGSFGSGSNSETALSDCDKGKNEVNDKYTSGDIIDETKPNLIALRRTIYLTLNSCLDYEECAQKLMKMQLKTCQQNEFCQILLDCCAEQRTYEKFYGLLTHRICKMNKSFIEPFKEIFKDICQTTHCLDTNRLRNISKFFAHLLFTDAISWDVLDCIKLTEDEAITSRCIFIKSFFQELVEYMGLYHFNKKLKTEVLAGTLAGLFPKDNPRNIRFSINFFTSIGLGGITNELCQLLKIAPKSAPSSSSSSSLSSELSAPSDDDSSSDSENKKKHKGKNKKMTKKKNPSKKKEETKKIVGKNKIAAKNKTIKRRTDKDNSSSKDNFLKSESSSNESISLDSLSSELFAPSSYSSSESSNDSESKEKHKGKNKKMTKKKNPSNKREKTKKKLSKNKKAPNKNTKKRMTEKDISSSESSISESKSLNCSASNQNENEKRKKRVTSKSRTKRVKMFKQCQWVDADNQRDIKRKKRAEYRYEPLVYRKRNEEYLKKGGPNCRKDNYGNRQNHEISQRHDSEIKRRREERKKRHHEKNHSREYKRSKLGPCQREYFLYMCCQFYYPCTFQCLCQNCHFTFYS.

Basic and acidic residues predominate over residues 1-15 (MNATDAESRKPENKP). Disordered stretches follow at residues 1–51 (MNAT…SGQR), 79–109 (RKDGSNEMLPKEDSINTNHNYTTDSDEHPVE), and 136–259 (KQLS…LRRS). The span at 16 to 35 (SSESSSSGSTSGSSDGEVSS) shows a compositional bias: low complexity. The span at 36–47 (KTYFKNNKSKVL) shows a compositional bias: polar residues. Positions 79-92 (RKDGSNEMLPKEDS) are enriched in basic and acidic residues. Low complexity predominate over residues 138–153 (LSAYRSRSRSTRLSYS). The span at 167 to 180 (SRYKKSVLRNRRTS) shows a compositional bias: basic residues. A compositionally biased stretch (basic and acidic residues) spans 183 to 200 (HGRDSSTTKRSVSRDKDN). Positions 201–223 (RLRRRIGSSRSHTRSHSRFRRSE) are enriched in basic residues. Residues 235–259 (RSQERRHERRRSMSSDYERIALRRS) are compositionally biased toward basic and acidic residues. The MIF4G domain occupies 348 to 531 (KKYIHGYINK…KVLFQVRRDG (184 aa)). Positions 597–608 (DSDGSFGSGSNS) are enriched in low complexity. A disordered region spans residues 597-616 (DSDGSFGSGSNSETALSDCD). In terms of domain architecture, MI spans 641–757 (ALRRTIYLTL…SWDVLDCIKL (117 aa)). Positions 840-857 (SAPSSSSSSSLSSELSAP) are enriched in low complexity. Disordered stretches follow at residues 840–1045 (SAPS…SRTK) and 1089–1135 (KGGP…SREY). Composition is skewed to basic residues over residues 869–886 (KKKHKGKNKKMTKKKNPS) and 895–909 (IVGKNKIAAKNKTIK). Positions 910 to 924 (RRTDKDNSSSKDNFL) are enriched in basic and acidic residues. Residues 926 to 957 (SESSSNESISLDSLSSELFAPSSYSSSESSND) are compositionally biased toward low complexity. A compositionally biased stretch (basic residues) spans 963–1001 (KHKGKNKKMTKKKNPSNKREKTKKKLSKNKKAPNKNTKK). The segment covering 1010–1020 (SSESSISESKS) has biased composition (low complexity). Over residues 1034–1045 (RKKRVTSKSRTK) the composition is skewed to basic residues. Over residues 1089-1118 (KGGPNCRKDNYGNRQNHEISQRHDSEIKRR) the composition is skewed to basic and acidic residues. The span at 1119–1130 (REERKKRHHEKN) shows a compositional bias: basic residues.

This sequence belongs to the CWC22 family. As to quaternary structure, component of the spliceosome C complex.

Its subcellular location is the nucleus speckle. Functionally, male determiner protein (M-factor) that controls male somatic sexual differentiation. Acts as a dominant factor that regulates the mRNA splicing of transformer (tra) and doublesex (dsx) transcripts and promotes expression of male splice forms of tra and dsx. Probably acts as a component of the spliceosome C complex required for mRNA splicing factor and exon-junction complex (EJC) assembly. Hinders eIF4AIII from non-specifically binding RNA and escorts it to the splicing machinery to promote EJC assembly on mature mRNAs. This Musca domestica (House fly) protein is Male determiner protein Mdmd(Y).